Reading from the N-terminus, the 150-residue chain is MGKSILLINGPNLNLLGTREPHIYGSTTLPDIVASSKAHAESLGATLEAFQSNHEGAIVDRIQEARGNVDGIVINPGAFTHTSVAIRDALLAVNIPFIELHVSNVHAREPWRHHSYFSDKAAGIIVGLGAYGYKVAVEHVALNFKERASL.

Residue Tyr24 is the Proton acceptor of the active site. Residues Asn75, His81, and Asp88 each contribute to the substrate site. Residue His101 is the Proton donor of the active site. Residues 102-103 (VS) and Arg112 contribute to the substrate site.

Belongs to the type-II 3-dehydroquinase family. Homododecamer. Adopts a ring-like structure, composed of an arrangement of two hexameric rings stacked on top of one another.

It catalyses the reaction 3-dehydroquinate = 3-dehydroshikimate + H2O. The protein operates within aromatic compound metabolism; 3,4-dihydroxybenzoate biosynthesis; 3,4-dihydroxybenzoate from 3-dehydroquinate: step 1/2. Its function is as follows. Is involved in the catabolism of quinate. Allows the utilization of quinate as carbon source via the beta-ketoadipate pathway. The polypeptide is Catabolic 3-dehydroquinase (Aspergillus clavatus (strain ATCC 1007 / CBS 513.65 / DSM 816 / NCTC 3887 / NRRL 1 / QM 1276 / 107)).